A 605-amino-acid polypeptide reads, in one-letter code: DNA mismatch repair protein MutL (605 aa).

This sequence belongs to the DNA mismatch repair MutL/HexB family.

In terms of biological role, this protein is involved in the repair of mismatches in DNA. It is required for dam-dependent methyl-directed DNA mismatch repair. May act as a 'molecular matchmaker', a protein that promotes the formation of a stable complex between two or more DNA-binding proteins in an ATP-dependent manner without itself being part of a final effector complex. The polypeptide is DNA mismatch repair protein MutL (Sinorhizobium medicae (strain WSM419) (Ensifer medicae)).